Here is a 394-residue protein sequence, read N- to C-terminus: Elongation factor Tu 2 (394 aa).

Residues 10–204 form the tr-type G domain; that stretch reads KPHVNVGTIG…YLDSYIPEPE (195 aa). Residues 19–26 form a G1 region; it reads GHVDHGKT. Residue 19–26 participates in GTP binding; it reads GHVDHGKT. Threonine 26 is a binding site for Mg(2+). The segment at 60 to 64 is G2; sequence GITIN. The interval 81–84 is G3; sequence DCPG. Residues 81 to 85 and 136 to 139 each bind GTP; these read DCPGH and NKCD. Residues 136-139 are G4; it reads NKCD. Residues 174–176 are G5; it reads SAL.

This sequence belongs to the TRAFAC class translation factor GTPase superfamily. Classic translation factor GTPase family. EF-Tu/EF-1A subfamily. Monomer.

The protein localises to the cytoplasm. It carries out the reaction GTP + H2O = GDP + phosphate + H(+). GTP hydrolase that promotes the GTP-dependent binding of aminoacyl-tRNA to the A-site of ribosomes during protein biosynthesis. The protein is Elongation factor Tu 2 of Yersinia pseudotuberculosis serotype O:1b (strain IP 31758).